Consider the following 344-residue polypeptide: L-rhamnose-proton symporter (344 aa).

Transmembrane regions (helical) follow at residues 4–24 (AITM…CFYA), 38–58 (WSVG…ALLL), 68–88 (FSLS…IGNI), 101–121 (MGIG…TPII), 137–157 (TLLG…AGQL), 175–195 (LVLA…MNAA), 214–234 (LPSY…FCFI), 259–279 (VLLS…YAWG), 290–310 (ISWM…GLVL), and 323–343 (VLSL…IGMA).

The protein belongs to the L-rhamnose transporter (TC 2.A.7.6) family.

It localises to the cell inner membrane. It carries out the reaction L-rhamnopyranose(in) + H(+)(in) = L-rhamnopyranose(out) + H(+)(out). Functionally, uptake of L-rhamnose across the cytoplasmic membrane with the concomitant transport of protons into the cell (symport system). The chain is L-rhamnose-proton symporter from Escherichia coli O127:H6 (strain E2348/69 / EPEC).